The primary structure comprises 273 residues: Flagellin FljN (273 aa).

Belongs to the bacterial flagellin family. In C.crescentus, the flagellar filament is composed of multiple flagellins of 29 kDa; 27 kDa and 25 kDa.

It localises to the secreted. Its subcellular location is the bacterial flagellum. In terms of biological role, flagellin is the subunit protein which polymerizes to form the filaments of bacterial flagella. This Caulobacter vibrioides (strain ATCC 19089 / CIP 103742 / CB 15) (Caulobacter crescentus) protein is Flagellin FljN (fljN).